The chain runs to 765 residues: Probable dipeptidyl peptidase 4 (765 aa).

Positions 1–14 (MKWSILLLVGCAAA) are cleaved as a signal peptide. N-linked (GlcNAc...) asparagine glycans are attached at residues Asn35, Asn78, Asn101, Asn110, Asn169, Asn218, Asn465, and Asn490. Ser613 acts as the Charge relay system in catalysis. Asn665 carries N-linked (GlcNAc...) asparagine glycosylation. Residues Asp690 and His725 each act as charge relay system in the active site.

This sequence belongs to the peptidase S9B family.

The protein resides in the secreted. The catalysed reaction is Release of an N-terminal dipeptide, Xaa-Yaa-|-Zaa-, from a polypeptide, preferentially when Yaa is Pro, provided Zaa is neither Pro nor hydroxyproline.. Extracellular dipeptidyl-peptidase which removes N-terminal dipeptides sequentially from polypeptides having unsubstituted N-termini provided that the penultimate residue is proline. Contributes to pathogenicity. The sequence is that of Probable dipeptidyl peptidase 4 (dpp4) from Aspergillus fumigatus (strain ATCC MYA-4609 / CBS 101355 / FGSC A1100 / Af293) (Neosartorya fumigata).